The chain runs to 338 residues: Phenylalanine--tRNA ligase alpha subunit (338 aa).

Glu253 is a binding site for Mg(2+).

It belongs to the class-II aminoacyl-tRNA synthetase family. Phe-tRNA synthetase alpha subunit type 1 subfamily. As to quaternary structure, tetramer of two alpha and two beta subunits. Mg(2+) serves as cofactor.

The protein resides in the cytoplasm. It carries out the reaction tRNA(Phe) + L-phenylalanine + ATP = L-phenylalanyl-tRNA(Phe) + AMP + diphosphate + H(+). In Geotalea daltonii (strain DSM 22248 / JCM 15807 / FRC-32) (Geobacter daltonii), this protein is Phenylalanine--tRNA ligase alpha subunit.